We begin with the raw amino-acid sequence, 690 residues long: Rho guanine nucleotide exchange factor 4 (690 aa).

Positions 73–126 (KTQRKKLQKQAHVERRLHIGAVHKDGVKCWRKTIITSPESLNLPRRSHPLSQSA) are ABR (APC-binding region) domain. The interval 113–145 (LNLPRRSHPLSQSAPTGLNHMGWPEHTPGTAMP) is disordered. An SH3 domain is found at 194–253 (GSVVCAEALWDHVTMDDQELGFKAGDVIEVMDATNREWWWGRVADGEGWFPASFVRLRVN). The tract at residues 257 to 282 (PADDDAPLAGNSGAEDGGAEAQSSKD) is disordered. The DH domain occupies 284–468 (MRTNVINEIL…KNVAQLINER (185 aa)). The PH domain maps to 499-606 (ELIYSGELTR…WLKAFARERE (108 aa)).

As to quaternary structure, isoform 3 interacts with RHOA and RAC1, and (via ABR domain) with APC. Found in a complex consisting of ARHGEF4, APC and CTNNB1. As to expression, expressed at high levels in the brain, skeletal muscle and testis and at low levels in the kidney, lung, small intestine, ovary and prostate. Expression is aberrantly enhanced in most colorectal tumors.

It localises to the cytoplasm. The protein localises to the cell projection. Its subcellular location is the ruffle membrane. Acts as a guanine nucleotide exchange factor (GEF) for RHOA, RAC1 and CDC42 GTPases. Binding of APC may activate RAC1 GEF activity. The APC-ARHGEF4 complex seems to be involved in cell migration as well as in E-cadherin-mediated cell-cell adhesion. Required for MMP9 up-regulation via the JNK signaling pathway in colorectal tumor cells. Involved in tumor angiogenesis and may play a role in intestinal adenoma formation and tumor progression. This is Rho guanine nucleotide exchange factor 4 (ARHGEF4) from Homo sapiens (Human).